The chain runs to 379 residues: Cytochrome b (379 aa).

Helical transmembrane passes span 33–53, 77–98, 113–133, and 178–198; these read LGSL…FLAM, WTIR…YLHI, WNTG…GYVL, and FFTL…THLL. 2 residues coordinate heme b: H83 and H97. H182 and H196 together coordinate heme b. Residue H201 coordinates a ubiquinone. 4 helical membrane-spanning segments follow: residues 226-246, 288-308, 320-340, and 347-367; these read IKDI…TLLH, LGGV…PMTH, ISQC…WIGG, and FTTI…ILTP.

It belongs to the cytochrome b family. As to quaternary structure, the cytochrome bc1 complex contains 11 subunits: 3 respiratory subunits (MT-CYB, CYC1 and UQCRFS1), 2 core proteins (UQCRC1 and UQCRC2) and 6 low-molecular weight proteins (UQCRH/QCR6, UQCRB/QCR7, UQCRQ/QCR8, UQCR10/QCR9, UQCR11/QCR10 and a cleavage product of UQCRFS1). This cytochrome bc1 complex then forms a dimer. Requires heme b as cofactor.

The protein resides in the mitochondrion inner membrane. Component of the ubiquinol-cytochrome c reductase complex (complex III or cytochrome b-c1 complex) that is part of the mitochondrial respiratory chain. The b-c1 complex mediates electron transfer from ubiquinol to cytochrome c. Contributes to the generation of a proton gradient across the mitochondrial membrane that is then used for ATP synthesis. This is Cytochrome b (MT-CYB) from Bradypus tridactylus (Pale-throated three-toed sloth).